The chain runs to 418 residues: Cell division protein FtsA (418 aa).

Belongs to the FtsA/MreB family. As to quaternary structure, self-interacts. Interacts with FtsZ.

The protein resides in the cell inner membrane. In terms of biological role, cell division protein that is involved in the assembly of the Z ring. May serve as a membrane anchor for the Z ring. The sequence is that of Cell division protein FtsA from Buchnera aphidicola subsp. Schizaphis graminum (strain Sg).